The chain runs to 102 residues: Guanyl-specific ribonuclease Pc (102 aa).

2 disulfide bridges follow: Cys-2/Cys-10 and Cys-6/Cys-101. His-38 is an active-site residue. The active-site Proton acceptor is Glu-56. The active-site Proton donor is the His-90.

Belongs to the ribonuclease N1/T1 family.

It catalyses the reaction [RNA] containing guanosine + H2O = an [RNA fragment]-3'-guanosine-3'-phosphate + a 5'-hydroxy-ribonucleotide-3'-[RNA fragment].. The protein is Guanyl-specific ribonuclease Pc of Penicillium chrysogenum (Penicillium notatum).